Consider the following 340-residue polypeptide: Integral membrane protein SED5 (340 aa).

Residues 1–319 (MNIKDRTSEF…KYFDRIKSNR (319 aa)) lie on the Cytoplasmic side of the membrane. Positions 31–51 (RLQEKESENFANNTTGNGKSV) are disordered. The span at 39-51 (NFANNTTGNGKSV) shows a compositional bias: polar residues. Positions 146–173 (LNTQMKNISGSFKDVLEERQRLEMANKD) form a coiled coil. Residues 180 to 231 (TDTGHAPADDQTQSNHAADLTTYNNSNPFMTSLLDESSEKNNNSSNQGELSF) are disordered. Positions 189-209 (DQTQSNHAADLTTYNNSNPFM) are enriched in polar residues. Residues 249–311 (NVYLQERNRA…SGAQRELLKY (63 aa)) enclose the t-SNARE coiled-coil homology domain. The helical; Anchor for type IV membrane protein transmembrane segment at 320-340 (WLAAKVFFIIFVFFVIWVLVN) threads the bilayer.

It belongs to the syntaxin family. Interacts with SLY1, STF1, SFB3 and GOS1.

It localises to the membrane. It is found in the golgi apparatus membrane. In terms of biological role, required for vesicular transport between the endoplasmic reticulum and the Golgi complex. Acts as a target organelle soluble NSF attachment protein receptor (t-SNARE). The chain is Integral membrane protein SED5 (SED5) from Saccharomyces cerevisiae (strain ATCC 204508 / S288c) (Baker's yeast).